Consider the following 122-residue polypeptide: MTSLHSLAGLLLLMIIQSSWQMPDQDPDRNSMLLNENSMLTEPIEPLNMKRHSEGTFSNDYSKYLETRRAQDFVQWLKNSKRNGLFRRHADGTYTSDVSSYLQDQAAKDFVSWLKAGRGRRE.

The N-terminal stretch at 1 to 21 (MTSLHSLAGLLLLMIIQSSWQ) is a signal peptide. 2 propeptides span residues 83 to 86 (NGLF) and Glu-122.

It belongs to the glucagon family.

It is found in the secreted. Its function is as follows. Promotes hydrolysis of glycogen and lipids, and raises the blood sugar level. This Lophius americanus (American angler) protein is Glucagon-2 (gcg2).